Consider the following 346-residue polypeptide: Peroxidase 37 (346 aa).

The first 22 residues, 1–22, serve as a signal peptide directing secretion; that stretch reads MHSSLIKLGFLLLLIQVSLSHA. Pyrrolidone carboxylic acid is present on glutamine 23. Cystine bridges form between cysteine 33-cysteine 113, cysteine 66-cysteine 71, cysteine 119-cysteine 323, and cysteine 199-cysteine 231. Histidine 64 (proton acceptor) is an active-site residue. Ca(2+) contacts are provided by aspartate 65, valine 68, glycine 70, aspartate 72, and serine 74. An N-linked (GlcNAc...) asparagine glycan is attached at asparagine 79. Proline 161 contributes to the substrate binding site. Position 192 (histidine 192) interacts with heme b. Threonine 193 lines the Ca(2+) pocket. Residues asparagine 208 and asparagine 236 are each glycosylated (N-linked (GlcNAc...) asparagine). Ca(2+) contacts are provided by aspartate 244, threonine 247, and aspartate 252.

This sequence belongs to the peroxidase family. Classical plant (class III) peroxidase subfamily. It depends on heme b as a cofactor. Ca(2+) serves as cofactor.

The protein resides in the secreted. It is found in the vacuole. The enzyme catalyses 2 a phenolic donor + H2O2 = 2 a phenolic radical donor + 2 H2O. Removal of H(2)O(2), oxidation of toxic reductants, biosynthesis and degradation of lignin, suberization, auxin catabolism, response to environmental stresses such as wounding, pathogen attack and oxidative stress. These functions might be dependent on each isozyme/isoform in each plant tissue. This is Peroxidase 37 (PER37) from Arabidopsis thaliana (Mouse-ear cress).